The following is a 100-amino-acid chain: MKISEEEVRHVAKLSKLSFSESETTAFATTLSKIVDMVELLNEVDTEGVAITTTMADKKNVMRQDVAEEGTDRALLFKNVPEKENHFIKVPAILYDGGDA.

The protein belongs to the GatC family. In terms of assembly, heterotrimer of A, B and C subunits.

It carries out the reaction L-glutamyl-tRNA(Gln) + L-glutamine + ATP + H2O = L-glutaminyl-tRNA(Gln) + L-glutamate + ADP + phosphate + H(+). The enzyme catalyses L-aspartyl-tRNA(Asn) + L-glutamine + ATP + H2O = L-asparaginyl-tRNA(Asn) + L-glutamate + ADP + phosphate + 2 H(+). In terms of biological role, allows the formation of correctly charged Asn-tRNA(Asn) or Gln-tRNA(Gln) through the transamidation of misacylated Asp-tRNA(Asn) or Glu-tRNA(Gln) in organisms which lack either or both of asparaginyl-tRNA or glutaminyl-tRNA synthetases. The reaction takes place in the presence of glutamine and ATP through an activated phospho-Asp-tRNA(Asn) or phospho-Glu-tRNA(Gln). In Streptococcus pyogenes serotype M18 (strain MGAS8232), this protein is Aspartyl/glutamyl-tRNA(Asn/Gln) amidotransferase subunit C.